Consider the following 343-residue polypeptide: S-adenosylmethionine:tRNA ribosyltransferase-isomerase (343 aa).

The protein belongs to the QueA family. Monomer.

The protein resides in the cytoplasm. The enzyme catalyses 7-aminomethyl-7-carbaguanosine(34) in tRNA + S-adenosyl-L-methionine = epoxyqueuosine(34) in tRNA + adenine + L-methionine + 2 H(+). The protein operates within tRNA modification; tRNA-queuosine biosynthesis. Functionally, transfers and isomerizes the ribose moiety from AdoMet to the 7-aminomethyl group of 7-deazaguanine (preQ1-tRNA) to give epoxyqueuosine (oQ-tRNA). The sequence is that of S-adenosylmethionine:tRNA ribosyltransferase-isomerase from Stenotrophomonas maltophilia (strain R551-3).